Reading from the N-terminus, the 530-residue chain is MNNARPIRRALISVSDKTGIVEFAQALAERGVDILSTGGTARLLAEQGIAVTEVSDYTGFPEMMDGRVKTLHPKVHGGVLGRRGQDDDVMEKHGINPIDMVVVNLYPFAETVAKEGCTLADAVENIDIGGPTMVRSAAKNHKDVTIVVNAHDYNRVIAEMDANDKSLTLETRFDLAIAAFEHTASYDGMIANYFGTMVPSYGENKEGDEESKFPRTFNQQFEKKQDMRYGENSHQAAAFYVEANPQEASVSTARQIQGKALSYNNIADTDAALECVKEFNEPACVIVKHANPCGVALGKDILEAYNRAYQTDPTSAFGGIIAFNQELDAETATAIVERQFIEVIIAPSVSAEAIEVVAAKKNVRLLECGEWTTKTTGFDVKRVNGGLLVQDRDQGMVSLGDLKVVSKRQPTEEELKDALFCWKVAKYVKSNAIVYAKGDMTIGVGAGQMSRVYSAKIAGIKAADEGLEVAGSVMASDAFFPFRDGIDAAAEAGIKCVIQPGGSMRDDEVIAAADEHGMAMIFTGMRHFRH.

Positions 1 to 148 constitute an MGS-like domain; that stretch reads MNNARPIRRA…KNHKDVTIVV (148 aa).

The protein belongs to the PurH family.

It carries out the reaction (6R)-10-formyltetrahydrofolate + 5-amino-1-(5-phospho-beta-D-ribosyl)imidazole-4-carboxamide = 5-formamido-1-(5-phospho-D-ribosyl)imidazole-4-carboxamide + (6S)-5,6,7,8-tetrahydrofolate. The catalysed reaction is IMP + H2O = 5-formamido-1-(5-phospho-D-ribosyl)imidazole-4-carboxamide. It functions in the pathway purine metabolism; IMP biosynthesis via de novo pathway; 5-formamido-1-(5-phospho-D-ribosyl)imidazole-4-carboxamide from 5-amino-1-(5-phospho-D-ribosyl)imidazole-4-carboxamide (10-formyl THF route): step 1/1. Its pathway is purine metabolism; IMP biosynthesis via de novo pathway; IMP from 5-formamido-1-(5-phospho-D-ribosyl)imidazole-4-carboxamide: step 1/1. This Vibrio campbellii (strain ATCC BAA-1116) protein is Bifunctional purine biosynthesis protein PurH.